The sequence spans 431 residues: Histidinol dehydrogenase (431 aa).

Positions 127, 189, and 212 each coordinate NAD(+). Residues Ser-237, Gln-259, and His-262 each coordinate substrate. Residues Gln-259 and His-262 each coordinate Zn(2+). Residues Glu-326 and His-327 each act as proton acceptor in the active site. His-327, Asp-360, Glu-414, and His-419 together coordinate substrate. Asp-360 contacts Zn(2+). Residue His-419 coordinates Zn(2+).

Belongs to the histidinol dehydrogenase family. Zn(2+) serves as cofactor.

The enzyme catalyses L-histidinol + 2 NAD(+) + H2O = L-histidine + 2 NADH + 3 H(+). The protein operates within amino-acid biosynthesis; L-histidine biosynthesis; L-histidine from 5-phospho-alpha-D-ribose 1-diphosphate: step 9/9. In terms of biological role, catalyzes the sequential NAD-dependent oxidations of L-histidinol to L-histidinaldehyde and then to L-histidine. This is Histidinol dehydrogenase from Xanthomonas campestris pv. campestris (strain ATCC 33913 / DSM 3586 / NCPPB 528 / LMG 568 / P 25).